The following is a 377-amino-acid chain: uncharacterized protein (377 aa).

32 to 39 provides a ligand contact to ATP; sequence GPINSGKT.

This sequence belongs to the archaeal ATPase family.

This is an uncharacterized protein from Methanocaldococcus jannaschii (strain ATCC 43067 / DSM 2661 / JAL-1 / JCM 10045 / NBRC 100440) (Methanococcus jannaschii).